The sequence spans 1216 residues: ATP-dependent helicase/nuclease subunit A (1216 aa).

Residues Gln26–Ser488 enclose the UvrD-like helicase ATP-binding domain. Ala47 to Thr54 provides a ligand contact to ATP. Residues Lys515–Gly802 enclose the UvrD-like helicase C-terminal domain.

This sequence belongs to the helicase family. AddA subfamily. Heterodimer of AddA and AddB/RexB. Requires Mg(2+) as cofactor.

It catalyses the reaction Couples ATP hydrolysis with the unwinding of duplex DNA by translocating in the 3'-5' direction.. The catalysed reaction is ATP + H2O = ADP + phosphate + H(+). In terms of biological role, the heterodimer acts as both an ATP-dependent DNA helicase and an ATP-dependent, dual-direction single-stranded exonuclease. Recognizes the chi site generating a DNA molecule suitable for the initiation of homologous recombination. The AddA nuclease domain is required for chi fragment generation; this subunit has the helicase and 3' -&gt; 5' nuclease activities. The chain is ATP-dependent helicase/nuclease subunit A from Streptococcus pneumoniae (strain ATCC 700669 / Spain 23F-1).